Reading from the N-terminus, the 505-residue chain is Deoxyguanosinetriphosphate triphosphohydrolase (505 aa).

The HD domain occupies Arg66–Cys273.

This sequence belongs to the dGTPase family. Type 1 subfamily. In terms of assembly, homotetramer. Requires Mg(2+) as cofactor.

It carries out the reaction dGTP + H2O = 2'-deoxyguanosine + triphosphate + H(+). Functionally, dGTPase preferentially hydrolyzes dGTP over the other canonical NTPs. The chain is Deoxyguanosinetriphosphate triphosphohydrolase from Serratia proteamaculans (strain 568).